The primary structure comprises 132 residues: Small ribosomal subunit protein uS8 (132 aa).

It belongs to the universal ribosomal protein uS8 family. In terms of assembly, part of the 30S ribosomal subunit. Contacts proteins S5 and S12.

One of the primary rRNA binding proteins, it binds directly to 16S rRNA central domain where it helps coordinate assembly of the platform of the 30S subunit. The protein is Small ribosomal subunit protein uS8 of Rickettsia rickettsii (strain Sheila Smith).